The sequence spans 284 residues: Bifunctional protein FolD (284 aa).

NADP(+) is bound by residues glycine 166 to serine 168 and isoleucine 232.

The protein belongs to the tetrahydrofolate dehydrogenase/cyclohydrolase family. Homodimer.

The enzyme catalyses (6R)-5,10-methylene-5,6,7,8-tetrahydrofolate + NADP(+) = (6R)-5,10-methenyltetrahydrofolate + NADPH. The catalysed reaction is (6R)-5,10-methenyltetrahydrofolate + H2O = (6R)-10-formyltetrahydrofolate + H(+). The protein operates within one-carbon metabolism; tetrahydrofolate interconversion. Functionally, catalyzes the oxidation of 5,10-methylenetetrahydrofolate to 5,10-methenyltetrahydrofolate and then the hydrolysis of 5,10-methenyltetrahydrofolate to 10-formyltetrahydrofolate. This is Bifunctional protein FolD from Shewanella oneidensis (strain ATCC 700550 / JCM 31522 / CIP 106686 / LMG 19005 / NCIMB 14063 / MR-1).